The primary structure comprises 74 residues: UPF0154 protein LVIS_1358 (74 aa).

The chain crosses the membrane as a helical span at residues 4-24 (WIWILIVIVVGLACAAGGFYG).

The protein belongs to the UPF0154 family.

The protein resides in the cell membrane. The chain is UPF0154 protein LVIS_1358 from Levilactobacillus brevis (strain ATCC 367 / BCRC 12310 / CIP 105137 / JCM 1170 / LMG 11437 / NCIMB 947 / NCTC 947) (Lactobacillus brevis).